The chain runs to 151 residues: SsrA-binding protein (151 aa).

The protein belongs to the SmpB family.

It localises to the cytoplasm. In terms of biological role, required for rescue of stalled ribosomes mediated by trans-translation. Binds to transfer-messenger RNA (tmRNA), required for stable association of tmRNA with ribosomes. tmRNA and SmpB together mimic tRNA shape, replacing the anticodon stem-loop with SmpB. tmRNA is encoded by the ssrA gene; the 2 termini fold to resemble tRNA(Ala) and it encodes a 'tag peptide', a short internal open reading frame. During trans-translation Ala-aminoacylated tmRNA acts like a tRNA, entering the A-site of stalled ribosomes, displacing the stalled mRNA. The ribosome then switches to translate the ORF on the tmRNA; the nascent peptide is terminated with the 'tag peptide' encoded by the tmRNA and targeted for degradation. The ribosome is freed to recommence translation, which seems to be the essential function of trans-translation. The sequence is that of SsrA-binding protein from Wolinella succinogenes (strain ATCC 29543 / DSM 1740 / CCUG 13145 / JCM 31913 / LMG 7466 / NCTC 11488 / FDC 602W) (Vibrio succinogenes).